Reading from the N-terminus, the 423-residue chain is SH2 domain-containing protein 5 (423 aa).

In terms of domain architecture, PID spans alanine 28–tyrosine 146. Residues tryptophan 296 to tyrosine 392 enclose the SH2 domain. The interval tyrosine 392 to glycine 423 is disordered.

Interacts with BCR.

It is found in the postsynaptic density. Functionally, may be involved in synaptic plasticity regulation through the control of Rac-GTP levels. The chain is SH2 domain-containing protein 5 from Homo sapiens (Human).